A 250-amino-acid chain; its full sequence is Ubiquinone/menaquinone biosynthesis C-methyltransferase UbiE (250 aa).

S-adenosyl-L-methionine is bound by residues Thr73, Asp94, 122-123, and Ser139; that span reads NA.

It belongs to the class I-like SAM-binding methyltransferase superfamily. MenG/UbiE family.

It catalyses the reaction a 2-demethylmenaquinol + S-adenosyl-L-methionine = a menaquinol + S-adenosyl-L-homocysteine + H(+). It carries out the reaction a 2-methoxy-6-(all-trans-polyprenyl)benzene-1,4-diol + S-adenosyl-L-methionine = a 5-methoxy-2-methyl-3-(all-trans-polyprenyl)benzene-1,4-diol + S-adenosyl-L-homocysteine + H(+). It participates in quinol/quinone metabolism; menaquinone biosynthesis; menaquinol from 1,4-dihydroxy-2-naphthoate: step 2/2. It functions in the pathway cofactor biosynthesis; ubiquinone biosynthesis. Functionally, methyltransferase required for the conversion of demethylmenaquinol (DMKH2) to menaquinol (MKH2) and the conversion of 2-polyprenyl-6-methoxy-1,4-benzoquinol (DDMQH2) to 2-polyprenyl-3-methyl-6-methoxy-1,4-benzoquinol (DMQH2). The protein is Ubiquinone/menaquinone biosynthesis C-methyltransferase UbiE of Francisella tularensis subsp. mediasiatica (strain FSC147).